Here is a 52-residue protein sequence, read N- to C-terminus: UPF0181 protein CGSHiGG_01050 (52 aa).

It belongs to the UPF0181 family.

The chain is UPF0181 protein CGSHiGG_01050 from Haemophilus influenzae (strain PittGG).